We begin with the raw amino-acid sequence, 253 residues long: Hydroxyacylglutathione hydrolase (253 aa).

Histidine 54, histidine 56, aspartate 58, histidine 59, histidine 112, aspartate 131, and histidine 169 together coordinate Zn(2+).

Belongs to the metallo-beta-lactamase superfamily. Glyoxalase II family. Monomer. Zn(2+) serves as cofactor.

It catalyses the reaction an S-(2-hydroxyacyl)glutathione + H2O = a 2-hydroxy carboxylate + glutathione + H(+). The protein operates within secondary metabolite metabolism; methylglyoxal degradation; (R)-lactate from methylglyoxal: step 2/2. Thiolesterase that catalyzes the hydrolysis of S-D-lactoyl-glutathione to form glutathione and D-lactic acid. The polypeptide is Hydroxyacylglutathione hydrolase (Bartonella tribocorum (strain CIP 105476 / IBS 506)).